The sequence spans 680 residues: DNA ligase (680 aa).

NAD(+) contacts are provided by residues 44 to 48 (DHVYD), 93 to 94 (SM), and glutamate 125. Lysine 127 (N6-AMP-lysine intermediate) is an active-site residue. Positions 148, 182, 298, and 322 each coordinate NAD(+). Zn(2+) is bound by residues cysteine 416, cysteine 419, cysteine 434, and cysteine 439. The BRCT domain maps to 600-680 (NPDSEWNGRR…QFSQAMKEEQ (81 aa)).

Belongs to the NAD-dependent DNA ligase family. LigA subfamily. The cofactor is Mg(2+). Mn(2+) is required as a cofactor.

It carries out the reaction NAD(+) + (deoxyribonucleotide)n-3'-hydroxyl + 5'-phospho-(deoxyribonucleotide)m = (deoxyribonucleotide)n+m + AMP + beta-nicotinamide D-nucleotide.. Functionally, DNA ligase that catalyzes the formation of phosphodiester linkages between 5'-phosphoryl and 3'-hydroxyl groups in double-stranded DNA using NAD as a coenzyme and as the energy source for the reaction. It is essential for DNA replication and repair of damaged DNA. The protein is DNA ligase of Limosilactobacillus reuteri (strain DSM 20016) (Lactobacillus reuteri).